A 340-amino-acid chain; its full sequence is tRNA N6-adenosine threonylcarbamoyltransferase (340 aa).

Positions 113 and 117 each coordinate Fe cation. Substrate-binding positions include 135–139 (LVSGG), Asp-169, Gly-182, Asp-186, and Asn-274. Asp-302 contacts Fe cation.

It belongs to the KAE1 / TsaD family. Fe(2+) is required as a cofactor.

It is found in the cytoplasm. The enzyme catalyses L-threonylcarbamoyladenylate + adenosine(37) in tRNA = N(6)-L-threonylcarbamoyladenosine(37) in tRNA + AMP + H(+). Functionally, required for the formation of a threonylcarbamoyl group on adenosine at position 37 (t(6)A37) in tRNAs that read codons beginning with adenine. Is involved in the transfer of the threonylcarbamoyl moiety of threonylcarbamoyl-AMP (TC-AMP) to the N6 group of A37, together with TsaE and TsaB. TsaD likely plays a direct catalytic role in this reaction. The sequence is that of tRNA N6-adenosine threonylcarbamoyltransferase from Mycolicibacterium gilvum (strain PYR-GCK) (Mycobacterium gilvum (strain PYR-GCK)).